Consider the following 1003-residue polypeptide: SWI/SNF-related matrix-associated actin-dependent regulator of chromatin subfamily A containing DEAD/H box 1 (1003 aa).

Disordered regions lie at residues 15-130, 172-235, and 274-351; these read KKID…SKYK, GSSR…HFPD, and AKKE…EDYS. Basic and acidic residues-rich tracts occupy residues 172 to 188, 221 to 235, and 274 to 294; these read GSSR…DSSP, KQEA…HFPD, and AKKE…DNKS. A CUE domain is found at 221 to 264; it reads KQEASVKKLQRHFPDLDKEELREVLQEHDWSFHEALEALKLFAE. Over residues 295–311 the composition is skewed to low complexity; that stretch reads SAKAKANQNSNKAMAQN. Positions 321–333 are enriched in basic and acidic residues; that stretch reads KYSENAKRDTRDL. Residues 486 to 654 form the Helicase ATP-binding domain; that stretch reads ALLHKHKVNM…MSLLNFVMPH (169 aa). Residue 499–506 coordinates ATP; that stretch reads DEMGLGKT. Residues 605–608 carry the DEGH box motif; sequence DEGH. Residues 835-997 enclose the Helicase C-terminal domain; sequence ILEKLLSDIK…TIPLDMATLL (163 aa).

It belongs to the SNF2/RAD54 helicase family.

Its subcellular location is the nucleus. The protein resides in the chromosome. The catalysed reaction is ATP + H2O = ADP + phosphate + H(+). Its function is as follows. DNA helicase that possesses intrinsic ATP-dependent nucleosome-remodeling activity and is both required for DNA repair and heterochromatin organization. Promotes DNA end resection of double-strand breaks (DSBs) following DNA damage: probably acts by weakening histone DNA interactions in nucleosomes flanking DSBs. Required for the restoration of heterochromatin organization after replication. This chain is SWI/SNF-related matrix-associated actin-dependent regulator of chromatin subfamily A containing DEAD/H box 1 (smarcad1), found in Xenopus tropicalis (Western clawed frog).